The chain runs to 201 residues: 3-isopropylmalate dehydratase small subunit (201 aa).

The protein belongs to the LeuD family. LeuD type 1 subfamily. As to quaternary structure, heterodimer of LeuC and LeuD.

It carries out the reaction (2R,3S)-3-isopropylmalate = (2S)-2-isopropylmalate. Its pathway is amino-acid biosynthesis; L-leucine biosynthesis; L-leucine from 3-methyl-2-oxobutanoate: step 2/4. Its function is as follows. Catalyzes the isomerization between 2-isopropylmalate and 3-isopropylmalate, via the formation of 2-isopropylmaleate. The chain is 3-isopropylmalate dehydratase small subunit from Rhodopseudomonas palustris (strain ATCC BAA-98 / CGA009).